Consider the following 104-residue polypeptide: Flagellar hook-basal body complex protein FliE (104 aa).

The protein belongs to the FliE family.

It localises to the bacterial flagellum basal body. The protein is Flagellar hook-basal body complex protein FliE of Salmonella arizonae (strain ATCC BAA-731 / CDC346-86 / RSK2980).